The chain runs to 143 residues: Large ribosomal subunit protein uL15 (143 aa).

A disordered region spans residues 1-59 (MELNGIKPSLGAKHAKRRVGRGIGSGLGKTAGRGHKGQKSRAGGYHKVGFEGGQMPMQR). Residues 21–31 (RGIGSGLGKTA) show a composition bias toward gly residues.

This sequence belongs to the universal ribosomal protein uL15 family. As to quaternary structure, part of the 50S ribosomal subunit.

In terms of biological role, binds to the 23S rRNA. This is Large ribosomal subunit protein uL15 from Polaromonas sp. (strain JS666 / ATCC BAA-500).